A 571-amino-acid chain; its full sequence is Carboxylesterase 3B (571 aa).

The first 31 residues, 1–31 (MTNMRTMIPAGSSVLVWVTCLLLAFVTTVTG), serve as a signal peptide directing secretion. Residues C100 and C127 are joined by a disulfide bond. S232 serves as the catalytic Acyl-ester intermediate. A disulfide bond links C284 and C295. N-linked (GlcNAc...) asparagine glycosylation is present at N311. Catalysis depends on charge relay system residues E347 and H460. The short motif at 568 to 571 (PEEL) is the Prevents secretion from ER element.

It belongs to the type-B carboxylesterase/lipase family.

Its subcellular location is the endoplasmic reticulum lumen. The enzyme catalyses a carboxylic ester + H2O = an alcohol + a carboxylate + H(+). Involved in the detoxification of xenobiotics and in the activation of ester and amide prodrugs. The protein is Carboxylesterase 3B (Ces3b) of Mus musculus (Mouse).